A 124-amino-acid polypeptide reads, in one-letter code: Small ribosomal subunit protein uS12 (124 aa).

D89 bears the 3-methylthioaspartic acid mark.

This sequence belongs to the universal ribosomal protein uS12 family. As to quaternary structure, part of the 30S ribosomal subunit. Contacts proteins S8 and S17. May interact with IF1 in the 30S initiation complex.

Its function is as follows. With S4 and S5 plays an important role in translational accuracy. Interacts with and stabilizes bases of the 16S rRNA that are involved in tRNA selection in the A site and with the mRNA backbone. Located at the interface of the 30S and 50S subunits, it traverses the body of the 30S subunit contacting proteins on the other side and probably holding the rRNA structure together. The combined cluster of proteins S8, S12 and S17 appears to hold together the shoulder and platform of the 30S subunit. This chain is Small ribosomal subunit protein uS12, found in Leptospira biflexa serovar Patoc (strain Patoc 1 / Ames).